Reading from the N-terminus, the 526-residue chain is Light-independent protochlorophyllide reductase subunit B (526 aa).

Asp-36 serves as a coordination point for [4Fe-4S] cluster. Asp-284 serves as the catalytic Proton donor. 419-420 (GL) contributes to the substrate binding site.

The protein belongs to the ChlB/BchB/BchZ family. As to quaternary structure, protochlorophyllide reductase is composed of three subunits; BchL, BchN and BchB. Forms a heterotetramer of two BchB and two BchN subunits. Requires [4Fe-4S] cluster as cofactor.

It catalyses the reaction chlorophyllide a + oxidized 2[4Fe-4S]-[ferredoxin] + 2 ADP + 2 phosphate = protochlorophyllide a + reduced 2[4Fe-4S]-[ferredoxin] + 2 ATP + 2 H2O. It functions in the pathway porphyrin-containing compound metabolism; bacteriochlorophyll biosynthesis (light-independent). Functionally, component of the dark-operative protochlorophyllide reductase (DPOR) that uses Mg-ATP and reduced ferredoxin to reduce ring D of protochlorophyllide (Pchlide) to form chlorophyllide a (Chlide). This reaction is light-independent. The NB-protein (BchN-BchB) is the catalytic component of the complex. The polypeptide is Light-independent protochlorophyllide reductase subunit B (Halorhodospira halophila (strain DSM 244 / SL1) (Ectothiorhodospira halophila (strain DSM 244 / SL1))).